Here is a 222-residue protein sequence, read N- to C-terminus: Eukaryotic translation initiation factor 3 subunit K (222 aa).

The region spanning Y46–K208 is the PCI domain.

It belongs to the eIF-3 subunit K family. As to quaternary structure, component of the eukaryotic translation initiation factor 3 (eIF-3) complex. The eIF-3 complex interacts with pix.

It localises to the cytoplasm. Functionally, component of the eukaryotic translation initiation factor 3 (eIF-3) complex, which is involved in protein synthesis of a specialized repertoire of mRNAs and, together with other initiation factors, stimulates binding of mRNA and methionyl-tRNAi to the 40S ribosome. The eIF-3 complex specifically targets and initiates translation of a subset of mRNAs involved in cell proliferation. This chain is Eukaryotic translation initiation factor 3 subunit K, found in Drosophila sechellia (Fruit fly).